A 620-amino-acid polypeptide reads, in one-letter code: Dihydroxy-acid dehydratase (620 aa).

Position 82 (Asp-82) interacts with Mg(2+). [2Fe-2S] cluster is bound at residue Cys-123. 2 residues coordinate Mg(2+): Asp-124 and Lys-125. Residue Lys-125 is modified to N6-carboxylysine. [2Fe-2S] cluster is bound at residue Cys-197. Residue Glu-493 coordinates Mg(2+). The Proton acceptor role is filled by Ser-519.

The protein belongs to the IlvD/Edd family. As to quaternary structure, homodimer. Requires [2Fe-2S] cluster as cofactor. The cofactor is Mg(2+).

The catalysed reaction is (2R)-2,3-dihydroxy-3-methylbutanoate = 3-methyl-2-oxobutanoate + H2O. It catalyses the reaction (2R,3R)-2,3-dihydroxy-3-methylpentanoate = (S)-3-methyl-2-oxopentanoate + H2O. It functions in the pathway amino-acid biosynthesis; L-isoleucine biosynthesis; L-isoleucine from 2-oxobutanoate: step 3/4. The protein operates within amino-acid biosynthesis; L-valine biosynthesis; L-valine from pyruvate: step 3/4. In terms of biological role, functions in the biosynthesis of branched-chain amino acids. Catalyzes the dehydration of (2R,3R)-2,3-dihydroxy-3-methylpentanoate (2,3-dihydroxy-3-methylvalerate) into 2-oxo-3-methylpentanoate (2-oxo-3-methylvalerate) and of (2R)-2,3-dihydroxy-3-methylbutanoate (2,3-dihydroxyisovalerate) into 2-oxo-3-methylbutanoate (2-oxoisovalerate), the penultimate precursor to L-isoleucine and L-valine, respectively. The chain is Dihydroxy-acid dehydratase from Bifidobacterium longum subsp. infantis (strain ATCC 15697 / DSM 20088 / JCM 1222 / NCTC 11817 / S12).